Consider the following 150-residue polypeptide: Large ribosomal subunit protein bL9 (150 aa).

It belongs to the bacterial ribosomal protein bL9 family.

Binds to the 23S rRNA. The protein is Large ribosomal subunit protein bL9 of Shewanella putrefaciens (strain CN-32 / ATCC BAA-453).